A 165-amino-acid polypeptide reads, in one-letter code: UPF0303 protein Bcep1808_1522 (165 aa).

The protein belongs to the UPF0303 family.

This is UPF0303 protein Bcep1808_1522 from Burkholderia vietnamiensis (strain G4 / LMG 22486) (Burkholderia cepacia (strain R1808)).